Reading from the N-terminus, the 341-residue chain is S-adenosylmethionine:tRNA ribosyltransferase-isomerase (341 aa).

Belongs to the QueA family. As to quaternary structure, monomer.

The protein localises to the cytoplasm. The catalysed reaction is 7-aminomethyl-7-carbaguanosine(34) in tRNA + S-adenosyl-L-methionine = epoxyqueuosine(34) in tRNA + adenine + L-methionine + 2 H(+). It functions in the pathway tRNA modification; tRNA-queuosine biosynthesis. In terms of biological role, transfers and isomerizes the ribose moiety from AdoMet to the 7-aminomethyl group of 7-deazaguanine (preQ1-tRNA) to give epoxyqueuosine (oQ-tRNA). In Staphylococcus aureus (strain Mu3 / ATCC 700698), this protein is S-adenosylmethionine:tRNA ribosyltransferase-isomerase.